We begin with the raw amino-acid sequence, 91 residues long: UPF0386 protein Caul_4643 (91 aa).

The protein belongs to the UPF0386 family.

This chain is UPF0386 protein Caul_4643, found in Caulobacter sp. (strain K31).